We begin with the raw amino-acid sequence, 490 residues long: 4-hydroxyphenylacetaldehyde synthase (490 aa).

Residues Pro-97, His-198, and His-313 each contribute to the L-phenylalanine site. Lys-314 bears the N6-(pyridoxal phosphate)lysine mark. Residue Phe-343 coordinates L-phenylalanine.

It belongs to the group II decarboxylase family. In terms of assembly, homodimer. Pyridoxal 5'-phosphate serves as cofactor.

It carries out the reaction L-tyrosine + O2 + H2O + H(+) = (4-hydroxyphenyl)acetaldehyde + H2O2 + NH4(+) + CO2. Its function is as follows. Catalyzes the production of 4-hydroxyphenylacetaldehyde (HPAA) directly from L-tyrosine, tyramine not being formed as an intermediate. This Rhodiola rosea (Roseroot) protein is 4-hydroxyphenylacetaldehyde synthase.